The sequence spans 429 residues: Histidinol dehydrogenase (429 aa).

3 residues coordinate NAD(+): Tyr-130, Gln-191, and Asn-214. Residues Ser-237, Gln-259, and His-262 each coordinate substrate. Positions 259 and 262 each coordinate Zn(2+). Residues Glu-327 and His-328 each act as proton acceptor in the active site. Substrate contacts are provided by His-328, Asp-361, Glu-415, and His-420. Asp-361 lines the Zn(2+) pocket. His-420 serves as a coordination point for Zn(2+).

It belongs to the histidinol dehydrogenase family. Requires Zn(2+) as cofactor.

The catalysed reaction is L-histidinol + 2 NAD(+) + H2O = L-histidine + 2 NADH + 3 H(+). It functions in the pathway amino-acid biosynthesis; L-histidine biosynthesis; L-histidine from 5-phospho-alpha-D-ribose 1-diphosphate: step 9/9. Catalyzes the sequential NAD-dependent oxidations of L-histidinol to L-histidinaldehyde and then to L-histidine. This chain is Histidinol dehydrogenase, found in Neisseria gonorrhoeae (strain ATCC 700825 / FA 1090).